The sequence spans 172 residues: RNA silencing suppressor p19 (172 aa).

Disordered stretches follow at residues 1–38 and 152–172; these read MEGA…ESPG and VEGN…KESE. 2 stretches are compositionally biased toward basic and acidic residues: residues 9–20 and 159–172; these read DAREQANSERWD and GRPE…KESE.

This sequence belongs to the tombusvirus protein p19 family. As to quaternary structure, homodimer.

Viral suppressor of RNA silencing which binds specifically to silencing RNAs (siRNAs). Acts as a molecular caliper to specifically select siRNAs based on the length of the duplex region of the RNA. The chain is RNA silencing suppressor p19 from Havel river virus (HaRV).